A 417-amino-acid polypeptide reads, in one-letter code: Odorant receptor Or1 (417 aa).

Residues Met1–Lys2 lie on the Cytoplasmic side of the membrane. A helical membrane pass occupies residues Leu3–Leu23. Topologically, residues Leu24 to Tyr45 are extracellular. The helical transmembrane segment at Ile46–Leu66 threads the bilayer. At Tyr67–Asp73 the chain is on the cytoplasmic side. The helical transmembrane segment at Ile74–Leu94 threads the bilayer. The Extracellular segment spans residues Glu95–Gly133. An N-linked (GlcNAc...) asparagine glycan is attached at Asn112. Residues Val134–Met154 form a helical membrane-spanning segment. Topologically, residues Ser155–Asp178 are cytoplasmic. Residues Ile179–Asn199 traverse the membrane as a helical segment. The Extracellular portion of the chain corresponds to Phe200–Asp284. Residues Ile285–Leu305 traverse the membrane as a helical segment. Residues Leu306 to Asp317 are Cytoplasmic-facing. A helical transmembrane segment spans residues Leu318–Val338. At Gly339–Glu417 the chain is on the extracellular side.

The protein belongs to the insect chemoreceptor superfamily. Heteromeric odorant receptor channel (TC 1.A.69) family. Or2a subfamily. In terms of tissue distribution, female-specific antennae and maxillary palp expression.

It localises to the cell membrane. Odorant receptor which plays a critical role in the anthropophilic host-seeking behavior; establishes the host preference to transmit malaria. May participate in the phenomenon of decreased host-seeking behavior in disease vector mosquitoes after blood feeding. This Anopheles gambiae (African malaria mosquito) protein is Odorant receptor Or1 (OR1).